Consider the following 136-residue polypeptide: Calcitonin (136 aa).

A signal peptide spans 1-25 (MGFLKFSPFLVVSILLLYQACGLQA). The propeptide occupies 26–82 (VPLRSTLESSPGMATLSEEEARLLAALVQNYMQMKVRELEQEEEQEAEGSSLDSPRS). Ser42 is subject to Phosphoserine. The interval 64 to 84 (LEQEEEQEAEGSSLDSPRSKR) is disordered. Cys85 and Cys91 form a disulfide bridge. Asn87 carries an N-linked (GlcNAc...) asparagine glycan. A disordered region spans residues 114–136 (GAPGKKRDMAKDLETNHHPYFGN). Pro116 bears the Proline amide mark. The segment covering 118 to 130 (KKRDMAKDLETNH) has biased composition (basic and acidic residues). Positions 121 to 136 (DMAKDLETNHHPYFGN) are excised as a propeptide.

The protein belongs to the calcitonin family.

The protein localises to the secreted. Its function is as follows. Calcitonin is a peptide hormone that causes a rapid but short-lived drop in the level of calcium and phosphate in blood by promoting the incorporation of those ions in the bones. Calcitonin function is mediated by the calcitonin receptor/CALCR and the CALCR-RAMP2 (AMYR2) receptor complex. The sequence is that of Calcitonin from Rattus norvegicus (Rat).